The following is a 150-amino-acid chain: Large ribosomal subunit protein uL15 (150 aa).

Residues 1-55 (MADNEILQMHDLKPAPGAKKDRTRVGRGEGSKGKTSGRGAKGQTKRNHVRPGFEG) are disordered. Positions 8–32 (QMHDLKPAPGAKKDRTRVGRGEGSK) are enriched in basic and acidic residues.

The protein belongs to the universal ribosomal protein uL15 family. Part of the 50S ribosomal subunit.

Its function is as follows. Binds to the 23S rRNA. The protein is Large ribosomal subunit protein uL15 of Bifidobacterium longum (strain NCC 2705).